The sequence spans 149 residues: MQIWVDADSVPLIAKDLIIKTAERTQTMAIFVANQPIKLRKSPLLVMTVVPSGFDKADDYIVEQIQPGDLAITSDIPLANDILDKGGMVLTTRGVVYDKNNIKQKLNMRDFMDTMRGTGVLELQEMSGQKPYGDRDKKAFADGLNKLVR.

This sequence belongs to the UPF0178 family.

The polypeptide is UPF0178 protein Psyc_0274 (Psychrobacter arcticus (strain DSM 17307 / VKM B-2377 / 273-4)).